The chain runs to 452 residues: Interferon-induced protein 44-like (452 aa).

The 159-residue stretch at 1 to 159 (MEVTTRLTWN…YLECEVFRVE (159 aa)) folds into the TLDc domain.

It belongs to the IFI44 family. As to quaternary structure, interacts with FKBP5; this interaction modulates IKBKB and IKBKE kinase activities.

It is found in the cytoplasm. Type I interferon-stimulated gene (ISG) that plays a critical role in antiviral and antibacterial activity. During bacterial infection, promotes macrophage differentiation and facilitates inflammatory cytokine secretion. Plays a role in the control of respiratory syncytial virus/RSV infection, reducing the ability of the virus to replicate. Exhibits a low antiviral activity against hepatitis C virus. Also acts as a feedback regulator of IFN responses by negatively regulating IKBKB and IKBKE kinase activities through interaction with FKBP5. This chain is Interferon-induced protein 44-like (IFI44L), found in Homo sapiens (Human).